The sequence spans 370 residues: Translocating chain-associated membrane protein 2 (370 aa).

Residues 1 to 22 (MAFRRRTKSYPLFSQEFIIHNH) are Cytoplasmic-facing. A helical transmembrane segment spans residues 23 to 43 (ADIGFCLVLCVLIGLMFEVTA). Topologically, residues 44–75 (KTAFLFILPQYNISVPTADSETVHYHYGPKDL) are extracellular. An N-linked (GlcNAc...) asparagine glycan is attached at Asn55. The chain crosses the membrane as a helical span at residues 76–96 (VTILFYVVITIIFHAVVQEYI). Residues 97–119 (LDKISKRLHLSKVKHSKFNESGQ) lie on the Cytoplasmic side of the membrane. A TLC domain is found at 112–321 (SKFNESGQLL…HSQLRHWREY (210 aa)). A helical transmembrane segment spans residues 120–140 (LLVFHLSAVAWCFYVIVTEGY). At 141-159 (LTNPRSLWEDYPHVYLSFQ) the chain is on the extracellular side. A helical transmembrane segment spans residues 160–180 (VKFFYLGQLAYWLHSLPELYF). Over 181 to 191 (QKVRKEEVPRQ) the chain is Cytoplasmic. Residues 192–209 (LQYICLYLLHITGAYLLN) traverse the membrane as a helical segment. Residues 210-214 (LSRLG) are Extracellular-facing. Residues 215 to 235 (LILLLLQYSTEALFHMARLFH) traverse the membrane as a helical segment. Residues 236–250 (FADENNERLFNAWAA) are Cytoplasmic-facing. The helical transmembrane segment at 251-271 (VFGVTRLFILTLAVLTIGFGL) threads the bilayer. Residues 272–287 (ARVENQVFDPEKGNFN) are Extracellular-facing. The helical transmembrane segment at 288–308 (TLPCRLGMLLLVCVAQAWLMW) threads the bilayer. Topologically, residues 309–370 (RFIHSQLRHW…SSRTKKLKSP (62 aa)) are cytoplasmic. Residues 332-370 (SAVPRPPAKLLKREPGYHENGVVKAENGTSSRTKKLKSP) are disordered.

Belongs to the TRAM family. Interacts with COL1A1. Interacts with SERCA2B.

It localises to the membrane. Necessary for collagen type I synthesis. May couple the activity of the ER Ca(2+) pump SERCA2B with the activity of the translocon. This coupling may increase the local Ca(2+) concentration at the site of collagen synthesis, and a high Ca(2+) concentration may be necessary for the function of molecular chaperones involved in collagen folding. Required for proper insertion of the first transmembrane helix N-terminus of TM4SF20 into the ER lumen, may act as a ceramide sensor for regulated alternative translocation (RAT). The sequence is that of Translocating chain-associated membrane protein 2 (Tram2) from Mus musculus (Mouse).